Reading from the N-terminus, the 251-residue chain is MARFFDSRTTIFSPEGRLYQVEYAMEAASQSGTCVGLLAKNGVLLATERSVDKLMDTSIPVPRISWLNENIACCATGNTADGNVLVNQLRMIAQQYQFNFGEMIPCEQLVTNLCDIKQAYTQYGGKRPFGVSFLYMGWDCRFGFQLYQSDPSGNYSGWKATCIGRKSGAAMEMLQKELFSKGYVSPSVEEAKDVAIKVMGMTLGRDSLTPEKLEIAFVQRYGNTTVFHILEKNEIHRLIERNNNLKRRVGS.

The protein belongs to the peptidase T1A family. As to quaternary structure, the 26S proteasome consists of a 20S proteasome core and two 19S regulatory subunits. The 20S proteasome core is composed of 28 subunits that are arranged in four stacked rings, resulting in a barrel-shaped structure. The two end rings are each formed by seven alpha subunits, and the two central rings are each formed by seven beta subunits. The catalytic chamber with the active sites is on the inside of the barrel. As to expression, testis, prominent after meiosis II. After meiosis, predominantly localized to the haploid spermatid nuclei of the 64-cell cysts, remaining during the elongation and condensation of the spermatid nuclei. In mature, motile sperm, expression is seen exclusively in the sperm head.

Its subcellular location is the nucleus. The proteasome is a multicatalytic proteinase complex which is characterized by its ability to cleave peptides with Arg, Phe, Tyr, Leu, and Glu adjacent to the leaving group at neutral or slightly basic pH. The proteasome has an ATP-dependent proteolytic activity. This Drosophila melanogaster (Fruit fly) protein is Proteasome subunit alpha type-4-like (Prosalpha3T).